Reading from the N-terminus, the 264-residue chain is Transmembrane protein 41A (264 aa).

The signal sequence occupies residues 1–17 (MRALLGLLLVFGGCTFA). Helical transmembrane passes span 67–87 (AYVF…AIPG), 100–122 (GPWL…CYLL), 153–173 (LFFF…FLNL), 175–195 (APIL…GLIP), and 219–239 (WETV…GTLI). Residues 96–207 (GALFGPWLGL…FICVQTGSIL (112 aa)) are VTT domain.

Belongs to the TMEM41 family.

The protein localises to the membrane. In Mus musculus (Mouse), this protein is Transmembrane protein 41A (Tmem41a).